The sequence spans 137 residues: Large ribosomal subunit protein uL16 (137 aa).

The protein belongs to the universal ribosomal protein uL16 family. Part of the 50S ribosomal subunit.

Functionally, binds 23S rRNA and is also seen to make contacts with the A and possibly P site tRNAs. In Leuconostoc citreum (strain KM20), this protein is Large ribosomal subunit protein uL16.